Reading from the N-terminus, the 110-residue chain is Endoribonuclease SymE (110 aa).

The region spanning serine 29 to proline 74 is the SpoVT-AbrB domain.

It belongs to the SymE family.

The protein resides in the cytoplasm. Functionally, involved in the degradation and recycling of damaged RNA. It is itself a target for degradation by the ATP-dependent protease Lon. In Salmonella paratyphi C (strain RKS4594), this protein is Endoribonuclease SymE.